A 159-amino-acid chain; its full sequence is ATP synthase subunit b', chloroplastic (159 aa).

The helical transmembrane segment at 30–47 (LMALQFLALTIILNLIYY) threads the bilayer.

The protein belongs to the ATPase B chain family. In terms of assembly, F-type ATPases have 2 components, F(1) - the catalytic core - and F(0) - the membrane proton channel. F(1) has five subunits: alpha(3), beta(3), gamma(1), delta(1), epsilon(1). F(0) has four main subunits: a(1), b(1), b'(1) and c(10-14). The alpha and beta chains form an alternating ring which encloses part of the gamma chain. F(1) is attached to F(0) by a central stalk formed by the gamma and epsilon chains, while a peripheral stalk is formed by the delta, b and b' chains.

The protein localises to the plastid. Its subcellular location is the chloroplast thylakoid membrane. Its function is as follows. F(1)F(0) ATP synthase produces ATP from ADP in the presence of a proton or sodium gradient. F-type ATPases consist of two structural domains, F(1) containing the extramembraneous catalytic core and F(0) containing the membrane proton channel, linked together by a central stalk and a peripheral stalk. During catalysis, ATP synthesis in the catalytic domain of F(1) is coupled via a rotary mechanism of the central stalk subunits to proton translocation. Component of the F(0) channel, it forms part of the peripheral stalk, linking F(1) to F(0). The b'-subunit is a diverged and duplicated form of b found in plants and photosynthetic bacteria. In Antithamnion sp. (Red alga), this protein is ATP synthase subunit b', chloroplastic.